Here is a 350-residue protein sequence, read N- to C-terminus: Phosphotriesterase-related protein (350 aa).

Residues His-22, His-24, Glu-169, His-201, His-230, and Asp-298 each contribute to the a divalent metal cation site.

The protein belongs to the metallo-dependent hydrolases superfamily. Phosphotriesterase family. The cofactor is a divalent metal cation.

This Drosophila mojavensis (Fruit fly) protein is Phosphotriesterase-related protein.